We begin with the raw amino-acid sequence, 433 residues long: Serine--tRNA ligase (433 aa).

An L-serine-binding site is contributed by 235–237 (TSE). Residue 266–268 (RSE) participates in ATP binding. Residue glutamate 289 participates in L-serine binding. Residue 353–356 (EISS) coordinates ATP. L-serine is bound at residue serine 388.

The protein belongs to the class-II aminoacyl-tRNA synthetase family. Type-1 seryl-tRNA synthetase subfamily. As to quaternary structure, homodimer. The tRNA molecule binds across the dimer.

The protein localises to the cytoplasm. The enzyme catalyses tRNA(Ser) + L-serine + ATP = L-seryl-tRNA(Ser) + AMP + diphosphate + H(+). It carries out the reaction tRNA(Sec) + L-serine + ATP = L-seryl-tRNA(Sec) + AMP + diphosphate + H(+). It participates in aminoacyl-tRNA biosynthesis; selenocysteinyl-tRNA(Sec) biosynthesis; L-seryl-tRNA(Sec) from L-serine and tRNA(Sec): step 1/1. Catalyzes the attachment of serine to tRNA(Ser). Is also able to aminoacylate tRNA(Sec) with serine, to form the misacylated tRNA L-seryl-tRNA(Sec), which will be further converted into selenocysteinyl-tRNA(Sec). This Burkholderia cenocepacia (strain ATCC BAA-245 / DSM 16553 / LMG 16656 / NCTC 13227 / J2315 / CF5610) (Burkholderia cepacia (strain J2315)) protein is Serine--tRNA ligase.